The chain runs to 652 residues: Potassium voltage-gated channel subfamily KQT member 1 (652 aa).

Topologically, residues 1–110 are cytoplasmic; the sequence is MSSEQPAWTF…YNFLERPTGW (110 aa). Residues 111-132 traverse the membrane as a helical segment; the sequence is KCFVYHFTVFLIVLICLIFSVL. Over 133–143 the chain is Extracellular; sequence STIQQYNNLAT. The helical transmembrane segment at 144–166 threads the bilayer; the sequence is ETLFWMEIVLVVFFGAEYVVRLW. Residues 167–182 are Cytoplasmic-facing; sequence SAGCRSKYVGVWGRLR. The chain crosses the membrane as a helical span at residues 183–208; it reads FARKPISVIDLIVVVASVIVLCVGSN. The Extracellular portion of the chain corresponds to 209-216; that stretch reads GQVFATSA. Residues 217-232 traverse the membrane as a helical; Voltage-sensor segment; it reads IRGIRFLQILRMLHVD. The interval 228–236 is interaction with KCNE3; the sequence is MLHVDRQGG. Over 233-250 the chain is Cytoplasmic; the sequence is RQGGTWRLLGSVVFIHRQ. Gln234 is a binding site for a 1,2-diacyl-sn-glycero-3-phospho-(1D-myo-inositol-4,5-bisphosphate). The chain crosses the membrane as a helical span at residues 251 to 273; it reads ELITTLYIGFLGLIFSSYFVYLA. Residues 274-289 lie on the Extracellular side of the membrane; sequence EKDAIDSSGEYQFGSY. The pore-forming intramembrane region spans 290–310; that stretch reads ADALWWGVVTVTTIGYGDKVP. Topologically, residues 311–312 are extracellular; the sequence is QT. A helical transmembrane segment spans residues 313 to 338; it reads WIGKTIASCFSVFAISFFALPAGILG. Residues 339 to 652 lie on the Cytoplasmic side of the membrane; the sequence is SGFALKVQQK…VPRMTQDNIS (314 aa). Residues 360 to 372 are interaction with CALM; that stretch reads AAASLIQTAWRCY. Positions 393 to 419 are disordered; sequence HHLMSPSPKPKKSAMVKKKKIRTERDE. A compositionally biased stretch (basic residues) spans 401–414; the sequence is KPKKSAMVKKKKIR. Positions 504–518 are interaction with CALM; calcium-dependent; it reads KVIRRMQYFVAKKKF. The segment at 524 to 561 is interaction with KCNE1 C-terminus; the sequence is PYDVRDVIEQYSQGHLNLMVRIKELQRRLDQSLGKPSL. Residues 577–605 form an interaction with AKAP9 region; the sequence is IGSRLNRVEDKVTQMDHKLNLITDMLHHL. The C-terminal assembly domain (tetramerization) stretch occupies residues 578–609; that stretch reads GSRLNRVEDKVTQMDHKLNLITDMLHHLLTNQ. The disordered stretch occupies residues 609–652; the sequence is QQGSQSIRTPHRSNSLNSENHPSRNTLPTYEQLNVPRMTQDNIS.

The protein belongs to the potassium channel family. KQT (TC 1.A.1.15) subfamily. Kv7.1/KCNQ1 sub-subfamily. In terms of assembly, tetramer. Heterotetramer with KCNE1; targets to the membrane raft. Interacts (via C-terminus) with CALM; forms a heterotetramer in a calcium-independent manner. Interacts with KCNE2; form a heterooligomer complex that targets to the membrane raft and leading to currents with an apparently instantaneous activation, a rapid deactivation process and a linear current-voltage relationship and decreases the amplitude of the outward current. Interacts with KCNE3; four KCNE3 molecules are bound to one KCNQ1 tetramer (4:4 KCNQ1:KCNE3 stoichiometry); alters membrane raft localization; affects KCNQ1 structure and gating properties. Interacts with KCNE4; impairs KCNQ1 localization in lipid rafts and inhibits voltage-gated potassium channel activity. Interacts with KCNE5; impairs KCNQ1 localization in lipid rafts and only conducts current upon strong and continued depolarization.

Its subcellular location is the cell membrane. It is found in the cytoplasmic vesicle membrane. It localises to the membrane raft. The protein localises to the endoplasmic reticulum. The protein resides in the basolateral cell membrane. It carries out the reaction K(+)(in) = K(+)(out). With respect to regulation, PIP2 molecule is essential to activate KCNQ channels by inducing the coupling of the voltage-sensing domain (VSD) and the pore-forming domain (PD). Upon channel activation, PIP2 disrupts the VSD-calmodulin/CALM interactions, causing the release of CALM from the VSD which triggers the opening of the gate. Calcium potentiates KCNQ1 channel current through calcium-bound CALM. Calcium-bound CALM competes with PIP2 to stabilize the channel open state. Pore-forming subunit of the voltage-gated potassium (Kv) channel involved in the regulation of cardiomyocyte excitability and important in normal development and functions of myocardium, inner ear, stomach and colon. Associates with KCNE beta subunits that modulates current kinetics. Induces a voltage-dependent by rapidly activating and slowly deactivating potassium-selective outward current. Also promotes a delayed voltage activated potassium current showing outward rectification characteristic. During beta-adrenergic receptor stimulation participates in cardiac repolarization by associating with KCNE1 to form the I(Ks) cardiac potassium current that increases the amplitude and slows down the activation kinetics of outward potassium current I(Ks). When associated with KCNE3, forms the potassium channel that is important for cyclic AMP-stimulated intestinal secretion of chloride ions. When associated with KCNE2, forms a heterooligomer complex leading to currents with an apparently instantaneous activation, a rapid deactivation process and a linear current-voltage relationship and decreases the amplitude of the outward current. When associated with KCNE4, inhibits voltage-gated potassium channel activity. When associated with KCNE5, this complex only conducts current upon strong and continued depolarization. In Xenopus laevis (African clawed frog), this protein is Potassium voltage-gated channel subfamily KQT member 1.